The sequence spans 699 residues: Auxin response factor 1 (699 aa).

A DNA-binding region (TF-B3) is located at residues 122-224 (FCKILTPSDT…EQRVGVRRLV (103 aa)). Disordered regions lie at residues 539 to 565 (TTTD…DSGQ) and 680 to 699 (EPHP…KTGF). The 90-residue stretch at 595–684 (RTRIKVQMHG…DEKKIEPHPK (90 aa)) folds into the PB1 domain. Residues 687 to 699 (SSANPEQDQKTGF) show a composition bias toward polar residues.

This sequence belongs to the ARF family. As to quaternary structure, homodimers and heterodimers. Expressed in roots, culms, leaves and young panicles.

The protein resides in the nucleus. In terms of biological role, auxin response factors (ARFs) are transcriptional factors that bind specifically to the DNA sequence 5'-TGTCTC-3' found in the auxin-responsive promoter elements (AuxREs). The chain is Auxin response factor 1 (ARF1) from Oryza sativa subsp. japonica (Rice).